Reading from the N-terminus, the 142-residue chain is Large ribosomal subunit protein uL11 (142 aa).

The protein belongs to the universal ribosomal protein uL11 family. In terms of assembly, part of the ribosomal stalk of the 50S ribosomal subunit. Interacts with L10 and the large rRNA to form the base of the stalk. L10 forms an elongated spine to which L12 dimers bind in a sequential fashion forming a multimeric L10(L12)X complex. One or more lysine residues are methylated.

In terms of biological role, forms part of the ribosomal stalk which helps the ribosome interact with GTP-bound translation factors. This Aliivibrio fischeri (strain MJ11) (Vibrio fischeri) protein is Large ribosomal subunit protein uL11.